Consider the following 380-residue polypeptide: Lipid-A-disaccharide synthase (380 aa).

The protein belongs to the LpxB family.

The enzyme catalyses a lipid X + a UDP-2-N,3-O-bis[(3R)-3-hydroxyacyl]-alpha-D-glucosamine = a lipid A disaccharide + UDP + H(+). It participates in bacterial outer membrane biogenesis; LPS lipid A biosynthesis. Functionally, condensation of UDP-2,3-diacylglucosamine and 2,3-diacylglucosamine-1-phosphate to form lipid A disaccharide, a precursor of lipid A, a phosphorylated glycolipid that anchors the lipopolysaccharide to the outer membrane of the cell. This chain is Lipid-A-disaccharide synthase, found in Azotobacter vinelandii (strain DJ / ATCC BAA-1303).